Reading from the N-terminus, the 110-residue chain is Protein YcgL (110 aa).

Residues 14-98 form the YcgL domain; sequence MFCVIYRSSK…PPEDLLKQHL (85 aa).

In Salmonella arizonae (strain ATCC BAA-731 / CDC346-86 / RSK2980), this protein is Protein YcgL.